The following is a 79-amino-acid chain: UPF0337 protein YhjA (79 aa).

The interval 1–30 (MALNDKLDATKDKVSGKVKETTGKVTGDEK) is disordered.

The protein belongs to the UPF0337 (CsbD) family.

The chain is UPF0337 protein YhjA (yhjA) from Lactococcus lactis subsp. lactis (strain IL1403) (Streptococcus lactis).